The chain runs to 649 residues: Acetyl-coenzyme A synthetase (649 aa).

Residues 191-194 (RGGR), threonine 309, and asparagine 333 each bind CoA. ATP is bound by residues 385–387 (GEP), 409–414 (DTWWQT), aspartate 498, and arginine 513. Residue serine 521 participates in CoA binding. Residue arginine 524 coordinates ATP. Positions 535, 537, and 540 each coordinate Mg(2+). Arginine 582 lines the CoA pocket. Lysine 607 carries the N6-acetyllysine modification.

Belongs to the ATP-dependent AMP-binding enzyme family. The cofactor is Mg(2+). In terms of processing, acetylated. Deacetylation by the SIR2-homolog deacetylase activates the enzyme.

The enzyme catalyses acetate + ATP + CoA = acetyl-CoA + AMP + diphosphate. Catalyzes the conversion of acetate into acetyl-CoA (AcCoA), an essential intermediate at the junction of anabolic and catabolic pathways. AcsA undergoes a two-step reaction. In the first half reaction, AcsA combines acetate with ATP to form acetyl-adenylate (AcAMP) intermediate. In the second half reaction, it can then transfer the acetyl group from AcAMP to the sulfhydryl group of CoA, forming the product AcCoA. The protein is Acetyl-coenzyme A synthetase of Novosphingobium aromaticivorans (strain ATCC 700278 / DSM 12444 / CCUG 56034 / CIP 105152 / NBRC 16084 / F199).